Consider the following 562-residue polypeptide: Solute carrier family 40 member 1 (562 aa).

At 1–20 (MDSPASKKPRCERFREFFKS) the chain is on the cytoplasmic side. The chain crosses the membrane as a helical span at residues 21-50 (AKFLIYVGHALSTWGDRMWNFAVAVFLVEL). Asp-36 is a Fe cation binding site. At 51–54 (YGNS) the chain is on the extracellular side. The helical transmembrane segment at 55–81 (LLLTAVYGLVVAGSVLLLGAIIGDWVD) threads the bilayer. The Cytoplasmic segment spans residues 82 to 84 (KNP). The helical transmembrane segment at 85 to 115 (RLKVAQTSLVVQNSAVILCGALLMAVFQFKQ) threads the bilayer. The Extracellular portion of the chain corresponds to 116–123 (QLSSMYDG). The chain crosses the membrane as a helical span at residues 124-159 (WLLTTCYIMVISIANIANLASTAMSITIQRDWVVVV). The Cytoplasmic segment spans residues 160-161 (AG). A helical membrane pass occupies residues 162 to 192 (DDRSKLADMNATVRIIDQLTNILAPMLVGQI). At 193–199 (MAFGSHF) the chain is on the extracellular side. Residues 200–226 (IGCGFISGWNLFSMCLEYFLLWKVYQK) traverse the membrane as a helical segment. Residues 227 to 300 (TPALAFKAGQ…DGWVAYYNQS (74 aa)) lie on the Cytoplasmic side of the membrane. Residues 301-327 (IFFAGMSLAFLYMTVLGFDCITTGYAY) traverse the membrane as a helical segment. Cys-320 is a Fe cation binding site. The Extracellular portion of the chain corresponds to 328-332 (TQGLN). A helical membrane pass occupies residues 333 to 360 (GSVLSLLMGASAVSGICGTVAFTWIRKK). Over 361-362 (CG) the chain is Cytoplasmic. A helical transmembrane segment spans residues 363-385 (LIRTGFIAGVTQLSCLTLCVASV). Over 386–444 (FAPGSPFDLSVSPFEEVLRHLFGDSGSLRESPTFIPTTEPPIQANVTVFEEAPPVESYM) the chain is Extracellular. Residues 445-474 (SVGLLFAGVIAARVGLWSFDLTVTQLIQEN) traverse the membrane as a helical segment. The Cytoplasmic segment spans residues 475 to 479 (VIESE). A helical membrane pass occupies residues 480-504 (RGVINGVQNSMNYLLDLLHFIMVIL). Fe cation is bound at residue His-498. Residues 505-507 (APN) lie on the Extracellular side of the membrane. The helical transmembrane segment at 508 to 533 (PEAFGLLVIISVSFVAMGHMMYFRFA) threads the bilayer. Over 534 to 562 (YKSLGSRLFLFCSPEQKPDPNIPSLPNSV) the chain is Cytoplasmic.

Belongs to the ferroportin (FP) (TC 2.A.100) family. SLC40A subfamily. In terms of tissue distribution, expressed in the yolk sac and placenta.

The protein resides in the cell membrane. It is found in the basolateral cell membrane. The catalysed reaction is Fe(2+)(in) = Fe(2+)(out). Its function is as follows. Transports Fe(2+) from the inside of a cell to the outside of the cell, playing a key role for maintaining systemic iron homeostasis. May be involved in transfer of Fe(2+) between maternal and fetal circulation. This Danio rerio (Zebrafish) protein is Solute carrier family 40 member 1 (slc40a1).